A 215-amino-acid polypeptide reads, in one-letter code: Glutathione S-transferase D4 (215 aa).

The region spanning 1–80 (MDFYYSPRSS…YLVEKYGKDD (80 aa)) is the GST N-terminal domain. Glutathione-binding positions include Ser9, 50-52 (HTI), and 64-66 (ESR). The GST C-terminal domain maps to 86–207 (DPQKRALINQ…KGLLQMKTMY (122 aa)).

This sequence belongs to the GST superfamily. Delta family. In terms of assembly, homodimer.

The enzyme catalyses RX + glutathione = an S-substituted glutathione + a halide anion + H(+). Its function is as follows. Conjugation of reduced glutathione to a wide number of exogenous and endogenous hydrophobic electrophiles. May be involved in detoxification. This is Glutathione S-transferase D4 from Drosophila melanogaster (Fruit fly).